Consider the following 453-residue polypeptide: uncharacterized protein (453 aa).

The [4Fe-4S] cluster site is built by C74, C80, C83, and C162. S-adenosyl-L-methionine contacts are provided by Q286, Y315, E336, and D384. C411 (nucleophile) is an active-site residue.

This sequence belongs to the class I-like SAM-binding methyltransferase superfamily. RNA M5U methyltransferase family.

This is an uncharacterized protein from Staphylococcus aureus (strain MRSA252).